Reading from the N-terminus, the 392-residue chain is Galactokinase (392 aa).

Position 37–40 (Glu-37–Asp-40) interacts with substrate. ATP contacts are provided by residues Ser-71 and Gly-128–Ser-134. Mg(2+) contacts are provided by Ser-134 and Glu-166. Asp-178 (proton acceptor) is an active-site residue. Tyr-228 lines the substrate pocket.

Belongs to the GHMP kinase family. GalK subfamily.

It localises to the cytoplasm. It carries out the reaction alpha-D-galactose + ATP = alpha-D-galactose 1-phosphate + ADP + H(+). It functions in the pathway carbohydrate metabolism; galactose metabolism. Its function is as follows. Catalyzes the transfer of the gamma-phosphate of ATP to D-galactose to form alpha-D-galactose-1-phosphate (Gal-1-P). The sequence is that of Galactokinase from Streptococcus pneumoniae serotype 4 (strain ATCC BAA-334 / TIGR4).